Reading from the N-terminus, the 410-residue chain is Adenosylhomocysteinase (410 aa).

Substrate is bound by residues aspartate 117 and glutamate 142. 143–145 (TTT) contacts NAD(+). Positions 172 and 176 each coordinate substrate. Residues asparagine 177, 206 to 211 (GYGYCG), glutamate 229, 285 to 287 (AGH), and asparagine 332 each bind NAD(+).

Belongs to the adenosylhomocysteinase family. NAD(+) serves as cofactor.

It localises to the cytoplasm. The enzyme catalyses S-adenosyl-L-homocysteine + H2O = L-homocysteine + adenosine. The protein operates within amino-acid biosynthesis; L-homocysteine biosynthesis; L-homocysteine from S-adenosyl-L-homocysteine: step 1/1. Its function is as follows. May play a key role in the regulation of the intracellular concentration of adenosylhomocysteine. This Thermoplasma volcanium (strain ATCC 51530 / DSM 4299 / JCM 9571 / NBRC 15438 / GSS1) protein is Adenosylhomocysteinase.